Here is a 205-residue protein sequence, read N- to C-terminus: RNA pyrophosphohydrolase (205 aa).

Positions 6 to 149 (GFRPNVGIVL…KRGVYARALR (144 aa)) constitute a Nudix hydrolase domain. The Nudix box motif lies at 38–59 (GGMNTDETPVEAMYRELREETG). A disordered region spans residues 178–205 (GSSAAGHDSPRKRPRKRNGARAMRINND). A compositionally biased stretch (basic residues) spans 187–196 (PRKRPRKRNG).

The protein belongs to the Nudix hydrolase family. RppH subfamily. A divalent metal cation is required as a cofactor.

In terms of biological role, accelerates the degradation of transcripts by removing pyrophosphate from the 5'-end of triphosphorylated RNA, leading to a more labile monophosphorylated state that can stimulate subsequent ribonuclease cleavage. The polypeptide is RNA pyrophosphohydrolase (Xanthomonas axonopodis pv. citri (strain 306)).